The chain runs to 188 residues: Elongation factor P-like protein (188 aa).

Belongs to the elongation factor P family.

This Aliivibrio fischeri (strain MJ11) (Vibrio fischeri) protein is Elongation factor P-like protein.